Consider the following 764-residue polypeptide: Probable cyclic nucleotide-gated ion channel 20, chloroplastic (764 aa).

A chloroplast-targeting transit peptide spans 1 to 25; the sequence is MASHNENDDIPMLPISDPSSRTRAR. The segment at 1-40 is disordered; it reads MASHNENDDIPMLPISDPSSRTRARAFTSRSRSVSLSNPT. Residues 19–33 show a composition bias toward low complexity; that stretch reads SSRTRARAFTSRSRS. The Stromal portion of the chain corresponds to 26–204; it reads AFTSRSRSVS…PHAKEVQTWT (179 aa). A helical membrane pass occupies residues 205–225; sequence KFFALSCLLAIFIDPLFFFLI. Topologically, residues 226 to 242 are lumenal; sequence KVQEQNKCIMIDWPMTK. Residues 243–263 traverse the membrane as a helical segment; that stretch reads AFVAVRSVTDVIFTMNILLQF. The Stromal portion of the chain corresponds to 264 to 295; it reads RLAYVARESTVVGAGQLVSHPKKIALHYLKGK. The helical transmembrane segment at 296 to 316 threads the bilayer; the sequence is FFLDLFIVMPLPQILILWIIP. The Lumenal portion of the chain corresponds to 317-329; the sequence is AHLGASGANYAKN. The helical transmembrane segment at 330 to 350 threads the bilayer; it reads LLRAAVLFQYIPKLYRLLPFL. Residues 351–366 lie on the Stromal side of the membrane; it reads AGQTPTGFIFESAWAN. Residues 367-387 form a helical membrane-spanning segment; it reads FVINLLTFMLAGHVVGSCWYL. At 388 to 488 the chain is on the lumenal side; sequence FGLQRVNQCL…GNQVPSYFLG (101 aa). Residues 489 to 509 form a helical membrane-spanning segment; sequence EVFFTMGIIGLGLLLFALLIG. Residues 510-764 are Stromal-facing; the sequence is NMQNFLQALG…LCTPQSSYSL (255 aa). A nucleoside 3',5'-cyclic phosphate contacts are provided by residues 593 to 710 and glutamate 658; that span reads IFSL…EDVT. A calmodulin-binding region spans residues 713-729; it reads FSRFLRSHRVQGAIRYD. The region spanning 734-763 is the IQ domain; that stretch reads RLRAARQIQVAWRYRRRRLHRLCTPQSSYS.

It belongs to the cyclic nucleotide-gated cation channel (TC 1.A.1.5) family. As to quaternary structure, homotetramer or heterotetramer.

Its subcellular location is the plastid. The protein localises to the chloroplast thylakoid membrane. Probable cyclic nucleotide-gated ion channel. This Arabidopsis thaliana (Mouse-ear cress) protein is Probable cyclic nucleotide-gated ion channel 20, chloroplastic (CNGC20).